A 915-amino-acid chain; its full sequence is Isoleucine--tRNA ligase (915 aa).

Positions 64 to 74 match the 'HIGH' region motif; it reads PYANGNFHVGH. Residue glutamate 557 coordinates L-isoleucyl-5'-AMP. The short motif at 598-602 is the 'KMSKS' region element; that stretch reads AMSKS. Lysine 601 is a binding site for ATP. Residues cysteine 887, cysteine 890, cysteine 902, and cysteine 905 each contribute to the Zn(2+) site.

The protein belongs to the class-I aminoacyl-tRNA synthetase family. IleS type 1 subfamily. As to quaternary structure, monomer. Requires Zn(2+) as cofactor.

The protein resides in the cytoplasm. The catalysed reaction is tRNA(Ile) + L-isoleucine + ATP = L-isoleucyl-tRNA(Ile) + AMP + diphosphate. Catalyzes the attachment of isoleucine to tRNA(Ile). As IleRS can inadvertently accommodate and process structurally similar amino acids such as valine, to avoid such errors it has two additional distinct tRNA(Ile)-dependent editing activities. One activity is designated as 'pretransfer' editing and involves the hydrolysis of activated Val-AMP. The other activity is designated 'posttransfer' editing and involves deacylation of mischarged Val-tRNA(Ile). The protein is Isoleucine--tRNA ligase of Leptospira biflexa serovar Patoc (strain Patoc 1 / ATCC 23582 / Paris).